A 180-amino-acid chain; its full sequence is MSTNAIARRYAKALVQIGAEEGQVDKFNSELTQFNTVLAANAGLTSVFSNPAYGIEAKREILKEIIGKLALSESVAKFLQLLLDRSRLAFLPQITESYGNFADDLSGVVRPTLTSGLPLEESQIEEIKTSLTKTTGKKVMLKVQVDPSLIGGVVTKIGDKVFDGSVKTQLAKIQDILQKG.

The protein belongs to the ATPase delta chain family. In terms of assembly, F-type ATPases have 2 components, F(1) - the catalytic core - and F(0) - the membrane proton channel. F(1) has five subunits: alpha(3), beta(3), gamma(1), delta(1), epsilon(1). F(0) has three main subunits: a(1), b(2) and c(10-14). The alpha and beta chains form an alternating ring which encloses part of the gamma chain. F(1) is attached to F(0) by a central stalk formed by the gamma and epsilon chains, while a peripheral stalk is formed by the delta and b chains.

It localises to the cell inner membrane. F(1)F(0) ATP synthase produces ATP from ADP in the presence of a proton or sodium gradient. F-type ATPases consist of two structural domains, F(1) containing the extramembraneous catalytic core and F(0) containing the membrane proton channel, linked together by a central stalk and a peripheral stalk. During catalysis, ATP synthesis in the catalytic domain of F(1) is coupled via a rotary mechanism of the central stalk subunits to proton translocation. Functionally, this protein is part of the stalk that links CF(0) to CF(1). It either transmits conformational changes from CF(0) to CF(1) or is implicated in proton conduction. This chain is ATP synthase subunit delta, found in Geotalea uraniireducens (strain Rf4) (Geobacter uraniireducens).